A 556-amino-acid chain; its full sequence is Arginine--tRNA ligase (556 aa).

A 'HIGH' region motif is present at residues 132–142 (ANPTGDLHLGH).

Belongs to the class-I aminoacyl-tRNA synthetase family. Monomer.

Its subcellular location is the cytoplasm. The catalysed reaction is tRNA(Arg) + L-arginine + ATP = L-arginyl-tRNA(Arg) + AMP + diphosphate. In Listeria monocytogenes serotype 4b (strain F2365), this protein is Arginine--tRNA ligase.